The following is a 291-amino-acid chain: Probable cell wall amidase LytH (291 aa).

A signal peptide spans 1-40 (MKKFNDWLEKHNLRNIPTLIVVVAFVLFVFMTIAFLNHND). Positions 41–105 (EDSSTIYITE…WVAGWHTNLN (65 aa)) constitute an SH3b domain. The interval 109-146 (DKNPNAKPLKDKTIVLDPGHGGSDQGASSNTHKKSKEK) is disordered. Residues 122-286 (IVLDPGHGGS…VEQAIVEGLR (165 aa)) form the MurNAc-LAA domain.

This sequence belongs to the N-acetylmuramoyl-L-alanine amidase 3 family.

It is found in the secreted. In terms of biological role, probably involved in cell-wall metabolism. The polypeptide is Probable cell wall amidase LytH (lytH) (Staphylococcus saprophyticus subsp. saprophyticus (strain ATCC 15305 / DSM 20229 / NCIMB 8711 / NCTC 7292 / S-41)).